The following is a 249-amino-acid chain: Probable transcriptional regulatory protein AB57_1731 (249 aa).

This sequence belongs to the TACO1 family.

The protein localises to the cytoplasm. This Acinetobacter baumannii (strain AB0057) protein is Probable transcriptional regulatory protein AB57_1731.